The primary structure comprises 261 residues: MEAAAEPLRSVRHLSRVLLFLSQCYILSGDGSLNLEHSQPLAQAIKDPGPTRTFSVVPRAAENQLFSHLTESTEIPPYMTKCPSNGLCSRLPADCIECATNVSCTYGKPVTFDCTVKPSVTCVDQDLKPQRNFVINMTCRFCWQLPETDYECSNSTTCMTVACPRQRYFANCTVRDHIHCLGNRTFPKLLYCNWTGGYKWSTALALSITLGGFGADRFYLGQWREGLGKLFSFGGLGIWTLIDVLLIGVGYVGPADGSLYI.

The signal sequence occupies residues 1-44; it reads MEAAAEPLRSVRHLSRVLLFLSQCYILSGDGSLNLEHSQPLAQA. Residues 45–193 lie on the Extracellular side of the membrane; the sequence is IKDPGPTRTF…RTFPKLLYCN (149 aa). 6 N-linked (GlcNAc...) asparagine glycosylation sites follow: Asn-101, Asn-136, Asn-154, Asn-171, Asn-183, and Asn-193. A helical membrane pass occupies residues 194–214; sequence WTGGYKWSTALALSITLGGFG. In terms of domain architecture, TM2 spans 197-244; the sequence is GYKWSTALALSITLGGFGADRFYLGQWREGLGKLFSFGGLGIWTLIDV. Over 215–229 the chain is Cytoplasmic; it reads ADRFYLGQWREGLGK. The chain crosses the membrane as a helical span at residues 230 to 250; that stretch reads LFSFGGLGIWTLIDVLLIGVG. At 251–261 the chain is on the extracellular side; sequence YVGPADGSLYI.

The protein belongs to the TM2 family.

Its subcellular location is the membrane. The sequence is that of TM2 domain-containing protein 3 (Tm2d3) from Mus musculus (Mouse).